A 719-amino-acid polypeptide reads, in one-letter code: Polyribonucleotide nucleotidyltransferase (719 aa).

Residues Asp487 and Asp493 each contribute to the Mg(2+) site. Positions 554–613 constitute a KH domain; sequence PRIETFKIATDKIREVIGTGGKVIREIVEKTGAKVNIEDDGTVKVASSDGEAMKAAIKWI. The region spanning 623–691 is the S1 motif domain; the sequence is GQIYDGTVVK…DRGKTRLSMK (69 aa). The disordered stretch occupies residues 691–719; sequence KVVDQTTGEDLEAKQKDAPAEAPREAAGE. Positions 701-719 are enriched in basic and acidic residues; the sequence is LEAKQKDAPAEAPREAAGE.

It belongs to the polyribonucleotide nucleotidyltransferase family. It depends on Mg(2+) as a cofactor.

It is found in the cytoplasm. It catalyses the reaction RNA(n+1) + phosphate = RNA(n) + a ribonucleoside 5'-diphosphate. In terms of biological role, involved in mRNA degradation. Catalyzes the phosphorolysis of single-stranded polyribonucleotides processively in the 3'- to 5'-direction. The sequence is that of Polyribonucleotide nucleotidyltransferase from Bradyrhizobium sp. (strain ORS 278).